A 43-amino-acid chain; its full sequence is Protein PsbN 2 (43 aa).

A helical membrane pass occupies residues 4-24 (ATILGISIAAALVGITVLALY).

It belongs to the PsbN family.

The protein resides in the cellular thylakoid membrane. Functionally, may play a role in photosystem I and II biogenesis. The polypeptide is Protein PsbN 2 (Microcystis aeruginosa (strain NIES-843 / IAM M-2473)).